The following is a 398-amino-acid chain: Galactose-3-O-sulfotransferase 2 (398 aa).

Residues 1–10 (MMSMLGGLQR) are Cytoplasmic-facing. Residues 11–31 (YFRVILLLLLALTLLLLAGFL) form a helical; Signal-anchor for type II membrane protein membrane-spanning segment. The Lumenal segment spans residues 32 to 398 (HSDLELDTPL…PLKNIPFLGA (367 aa)). 6 N-linked (GlcNAc...) asparagine glycosylation sites follow: Asn-79, Asn-132, Asn-179, Asn-287, Asn-330, and Asn-360.

Belongs to the galactose-3-O-sulfotransferase family. As to expression, ubiquitous. Detected in heart, stomach, colon, liver and spleen, in epithelial cells lining the lower to middle layer of the crypts in colonic mucosa, hepatocytes surrounding the central vein of the liver, extravillous cytotrophoblasts in the basal plate of the septum of the placenta, renal tubules of the kidney, and neuronal cells of the cerebral cortex.

The protein localises to the golgi apparatus. It localises to the golgi stack membrane. It participates in protein modification; carbohydrate sulfation. Strongly inhibited by Cu(2+) and Zn(2+). In terms of biological role, transfers a sulfate group to the hydroxyl group at C3 of non-reducing beta-galactosyl residues. Acts both on type 1 (Gal-beta-1,3-GlcNAc) and type 2 (Gal-beta-1,4-GlcNAc) chains with similar efficiency. This is Galactose-3-O-sulfotransferase 2 (GAL3ST2) from Homo sapiens (Human).